Here is a 307-residue protein sequence, read N- to C-terminus: MAASERNTGKFTEECPACGSAEIVFDEERGEYVCANCGLVTEDPVIDPGPEWRHFNPDQRQRRSRTGEPVKLRLPDKGISTIIDRELRDSGGKKNPRMRRIRTWDARIKVSGSRERNFFQAFLELENLASKLQLPESVRELAASIYRKAYKEGIVRGRGIESVLGAAVFAACKEARVPRTAREIAEALGVSDENEILRAYRVLQRRLNLKQKPTEPSDHLPRFASKLGVSENVQAKAQEIIEKAKEKGITVGKGPAGVAAAALYIASILEGERRTQKEIAEVARVTEVTIRNRYKEICEALGIELHP.

A TFIIB-type zinc finger spans residues 11–42; that stretch reads FTEECPACGSAEIVFDEERGEYVCANCGLVTE. Cys15, Cys18, Cys34, and Cys37 together coordinate Zn(2+). The segment at 48–69 is disordered; the sequence is PGPEWRHFNPDQRQRRSRTGEP. Basic and acidic residues predominate over residues 50 to 69; the sequence is PEWRHFNPDQRQRRSRTGEP. Tandem repeats lie at residues 123-207 and 218-299.

It belongs to the TFIIB family.

In terms of biological role, stabilizes TBP binding to an archaeal box-A promoter. Also responsible for recruiting RNA polymerase II to the pre-initiation complex (DNA-TBP-TFIIB). This chain is Transcription initiation factor IIB, found in Methanopyrus kandleri (strain AV19 / DSM 6324 / JCM 9639 / NBRC 100938).